Here is a 176-residue protein sequence, read N- to C-terminus: Ribosome rescue factor SmrB (176 aa).

The Smr domain maps to 97–172 (LDMHGMTQQE…GDGALLVLLS (76 aa)).

It belongs to the SmrB family. Associates with collided ribosomes, but not with correctly translating polysomes.

In terms of biological role, acts as a ribosome collision sensor. Detects stalled/collided disomes (pairs of ribosomes where the leading ribosome is stalled and a second ribosome has collided with it) and endonucleolytically cleaves mRNA at the 5' boundary of the stalled ribosome. Stalled/collided disomes form a new interface (primarily via the 30S subunits) that binds SmrB. Cleaved mRNA becomes available for tmRNA ligation, leading to ribosomal subunit dissociation and rescue of stalled ribosomes. The chain is Ribosome rescue factor SmrB from Vibrio vulnificus (strain YJ016).